Here is a 636-residue protein sequence, read N- to C-terminus: Fructose-1,6-bisphosphatase class 3 (636 aa).

It belongs to the FBPase class 3 family. Mn(2+) is required as a cofactor.

The catalysed reaction is beta-D-fructose 1,6-bisphosphate + H2O = beta-D-fructose 6-phosphate + phosphate. Its pathway is carbohydrate biosynthesis; gluconeogenesis. This is Fructose-1,6-bisphosphatase class 3 from Streptococcus gordonii (strain Challis / ATCC 35105 / BCRC 15272 / CH1 / DL1 / V288).